The chain runs to 149 residues: Myosin light chain 1 (149 aa).

EF-hand domains are found at residues 2-37 (SATR…IGYN), 81-116 (AKTE…LGEK), and 117-149 (LTDA…VLRQ). The Ca(2+) site is built by Asp-15, Asp-94, Thr-98, Lys-100, and Asp-105. Lys-116 is covalently cross-linked (Glycyl lysine isopeptide (Lys-Gly) (interchain with G-Cter in ubiquitin)). Residues Asp-123, Lys-127, and Asp-132 each coordinate Ca(2+).

In terms of assembly, interacts with MYO1, MYO2 and IQG1 by binding to their IQ domains. Interacts with SEC4.

It localises to the bud neck. The protein resides in the bud tip. Functionally, essential light chain for the class II conventional myosin MYO1. Also acts as light chain for the class V unconventional myosin MYO2 and for IQG1. Involved in the assembly of the contractile actomyosin ring at the bud neck during cytokinesis by recruiting IQG1 to the bud neck. Also required for chitin and MYO2-dependent secretory vesicle deposition to the center of the bud neck for septum formation. May stabilize MYO2 by binding to its IQ domains. Its major function is probably not to regulate MYO1 activity, but rather to coordinate actin ring formation and targeted membrane deposition during cytokinesis via its interactions with MYO1, IQG1 and MYO2. This chain is Myosin light chain 1 (MLC1), found in Saccharomyces cerevisiae (strain ATCC 204508 / S288c) (Baker's yeast).